We begin with the raw amino-acid sequence, 26 residues long: Dermaseptin-B5 (26 aa).

A Valine amide modification is found at Val26.

The protein belongs to the frog skin active peptide (FSAP) family. Dermaseptin subfamily. As to expression, expressed by the skin glands.

It localises to the secreted. Its function is as follows. Possesses a potent antimicrobial activity against Gram-positive and Gram-negative bacteria. Probably acts by disturbing membrane functions with its amphipathic structure. This Phyllomedusa bicolor (Two-colored leaf frog) protein is Dermaseptin-B5.